A 293-amino-acid chain; its full sequence is Inner membrane ABC transporter permease protein YcjO (293 aa).

Over 1–12 the chain is Periplasmic; the sequence is MNRLFSGRSDMP. Residues 13–33 form a helical membrane-spanning segment; that stretch reads FALLLLAPSLLLLGGLVAWPM. Over 34–77 the chain is Cytoplasmic; that stretch reads VSNIEISFLRLPLNPNIESTFVGVSNYVRILSDPGFWHSLWMTV. The ABC transmembrane type-1 domain occupies 73-283; it reads LWMTVWYTAL…IIIFAVILLT (211 aa). A helical transmembrane segment spans residues 78 to 98; that stretch reads WYTALVVAGSTVLGLAVAMFF. Over 99–110 the chain is Periplasmic; it reads NREFRLRKTARS. Residues 111 to 131 form a helical membrane-spanning segment; sequence LVILSYVTPSISLVFAWKYMF. Residues 132–135 lie on the Cytoplasmic side of the membrane; it reads NNGY. A helical transmembrane segment spans residues 136-156; the sequence is GIVNYLGVDLLHLYEQAPLWF. Residues 157–162 are Periplasmic-facing; the sequence is DNPGSS. A helical transmembrane segment spans residues 163–183; that stretch reads FVLVVLFAIWRYFPYAFISFL. Residues 184–214 lie on the Cytoplasmic side of the membrane; that stretch reads AILQTIDKSLYEAAEMDGANAWQRFRIVTLP. A helical transmembrane segment spans residues 215–235; that stretch reads AIMPVLATVVTLRTIWMFYMF. The Periplasmic segment spans residues 236 to 261; the sequence is ADVYLLTTKVDILGVYLYKTAFAFND. Residues 262 to 282 traverse the membrane as a helical segment; it reads LGKAAAISVVLFIIIFAVILL. The Cytoplasmic portion of the chain corresponds to 283–293; the sequence is TRKRVNLNGNK.

Belongs to the binding-protein-dependent transport system permease family. MalFG subfamily.

It localises to the cell inner membrane. In terms of biological role, probably part of the binding-protein-dependent transport system YcjNOP. Probably responsible for the translocation of the substrate across the membrane. The protein is Inner membrane ABC transporter permease protein YcjO (ycjO) of Escherichia coli (strain K12).